A 495-amino-acid polypeptide reads, in one-letter code: MARRAAAVLLLLALGCLLGILLLCLGSGDARGPPSFKYGIVLDAGSSHTAVFIYKWPADKENDTGVVSEHSMCDVEGPGISSYSSKPPAAGKSLEHCLSQAMRDVPKEKHADTPLYLGATAGMRLLTIADPPSQTCLSAVMATLKSYPFDFGGAKILSGEEEGVFGWITANYLLENFIKRGWLGEWIQSKKKTLGAMDFGGASTQITFETSDAIEDPKNEVMLKLYGQPYKVYTHSFLCYGRDQVLKRLLSKVLQAENYQETVANPCWPTGYRKSLSLSSIYDSPCTEKERPGLPLNTTVVVSGTGNGNLCAVHVNKLFDFTSCSFSHCSFDGVFQPEVSGNFIAFSAFFYTVDFIRTVMERPVHSPSDLKDAAETICATSWNELYQKAPRLEKRLPDYCATSTFVYLLITKGYNFNNRSFPSIAFQKKAGETSIGWALGYMLNLTNMIPAQEPASHRSMLYNYWVILILLFVITTLTALLTAVYLLRRSKSSTI.

The Cytoplasmic portion of the chain corresponds to Ala-2–Arg-4. The helical transmembrane segment at Ala-5 to Leu-25 threads the bilayer. Over Gly-26–Trp-465 the chain is Extracellular. Asn-62 carries an N-linked (GlcNAc...) asparagine glycan. The cysteines at positions 73 and 97 are disulfide-linked. The active-site Proton acceptor is the Glu-162. Gly-201–Gln-205 is an ATP binding site. 4 disulfides stabilise this stretch: Cys-239/Cys-286, Cys-267/Cys-311, Cys-324/Cys-329, and Cys-378/Cys-400. A glycan (N-linked (GlcNAc...) asparagine) is linked at Asn-297. Asn-418 and Asn-444 each carry an N-linked (GlcNAc...) asparagine glycan. Residues Val-466–Leu-486 form a helical membrane-spanning segment. Over Leu-487–Ile-495 the chain is Cytoplasmic.

This sequence belongs to the GDA1/CD39 NTPase family. Ca(2+) serves as cofactor. It depends on Mg(2+) as a cofactor.

The protein localises to the membrane. In the nervous system, could hydrolyze ATP and other nucleotides to regulate purinergic neurotransmission. Hydrolyzes ADP only to a marginal extent. This is Ectonucleoside triphosphate diphosphohydrolase 2 (ENTPD2) from Gallus gallus (Chicken).